The following is a 217-amino-acid chain: MRSRKSSRAEAPGLPTDRQLGLSWDVPGLLAGVDEAGRGPLAGPVVAAAVILDDVQPIRGLGDSKVLSERVRERLFDEIRAKALCCCIAEASVEEIDTLNILQATLLAMRRAVAGLRLRPNKVLVDGNRLPVLQVPAEAIVKGDAKVAAISAASILAKVHRDRLCLALHEAHPQYGFAGHKGYPTPDHLAALRVHGACGAHRRSFAPVREVLLERRP.

In terms of domain architecture, RNase H type-2 spans 28 to 217 (GLLAGVDEAG…VREVLLERRP (190 aa)). Positions 34, 35, and 126 each coordinate a divalent metal cation.

The protein belongs to the RNase HII family. The cofactor is Mn(2+). Mg(2+) is required as a cofactor.

The protein resides in the cytoplasm. It catalyses the reaction Endonucleolytic cleavage to 5'-phosphomonoester.. Endonuclease that specifically degrades the RNA of RNA-DNA hybrids. The chain is Ribonuclease HII 2 from Methylibium petroleiphilum (strain ATCC BAA-1232 / LMG 22953 / PM1).